Consider the following 44-residue polypeptide: Photosystem I reaction center subunit IX (44 aa).

Residues Tyr7–Ile27 traverse the membrane as a helical segment.

The protein belongs to the PsaJ family.

The protein resides in the plastid. Its subcellular location is the chloroplast thylakoid membrane. In terms of biological role, may help in the organization of the PsaE and PsaF subunits. The protein is Photosystem I reaction center subunit IX of Drimys granadensis.